A 181-amino-acid chain; its full sequence is MSQPAVAKRYALALFQLATEKQMIDEMQDQLQIVEEVFAKTPELMDVLTHPKITIERKKQFVSEAFAELSPTVQHTVLLLLERHRIQIVSEMVKEYRFLANEVRGVADATVYSVKPLSADEKRAISQSFASKVGKHTLNISNIVDKSLIGGVKLRIGNRIYDGSISSKLETIHRGLLAHRS.

The protein belongs to the ATPase delta chain family. F-type ATPases have 2 components, F(1) - the catalytic core - and F(0) - the membrane proton channel. F(1) has five subunits: alpha(3), beta(3), gamma(1), delta(1), epsilon(1). F(0) has three main subunits: a(1), b(2) and c(10-14). The alpha and beta chains form an alternating ring which encloses part of the gamma chain. F(1) is attached to F(0) by a central stalk formed by the gamma and epsilon chains, while a peripheral stalk is formed by the delta and b chains.

The protein localises to the cell membrane. In terms of biological role, f(1)F(0) ATP synthase produces ATP from ADP in the presence of a proton or sodium gradient. F-type ATPases consist of two structural domains, F(1) containing the extramembraneous catalytic core and F(0) containing the membrane proton channel, linked together by a central stalk and a peripheral stalk. During catalysis, ATP synthesis in the catalytic domain of F(1) is coupled via a rotary mechanism of the central stalk subunits to proton translocation. Functionally, this protein is part of the stalk that links CF(0) to CF(1). It either transmits conformational changes from CF(0) to CF(1) or is implicated in proton conduction. The sequence is that of ATP synthase subunit delta from Priestia megaterium (strain ATCC 12872 / QMB1551) (Bacillus megaterium).